The sequence spans 1411 residues: ATP-dependent permease PDR11 (1411 aa).

The Cytoplasmic segment spans residues 2 to 388; that stretch reads SLSKYFNPIP…IGDRNYLISQ (387 aa). An ABC transporter 1 domain is found at 31-273; that stretch reads VQNDEESASE…FHDTLQIKKN (243 aa). Residues 389-409 traverse the membrane as a helical segment; that stretch reads FVSVVVQSLVIGSLFYNIPLT. Residues 410 to 418 are Extracellular-facing; it reads TIGSFSRGS. A helical transmembrane segment spans residues 419 to 439; that stretch reads LTFFSILFFTFLSLADMPASF. Residues 440–471 lie on the Cytoplasmic side of the membrane; that stretch reads QRQPVVRKHVQLHFYYNWVETLATNFFDCCSK. Residues 472–492 form a helical membrane-spanning segment; that stretch reads FILVVIFTIILYFLAHLQYNA. Residues 493-494 lie on the Extracellular side of the membrane; sequence AR. Residues 495–515 form a helical membrane-spanning segment; sequence FFIFLLFLSVYNFCMVSLFAL. Residues 516–524 are Cytoplasmic-facing; the sequence is TALIAPTLS. Residues 525–545 form a helical membrane-spanning segment; it reads MANLLAGILLLAIAMYASYVI. Residues 546 to 636 are Extracellular-facing; the sequence is YMKDMHPWFI…YTYHHVWRNF (91 aa). A glycan (N-linked (GlcNAc...) asparagine) is linked at N595. Residues 637-657 form a helical membrane-spanning segment; that stretch reads GIIIGFLCFFLFCSLLAAEYI. Over 658 to 1090 the chain is Cytoplasmic; it reads TPLFTRENLL…QYICTKRDMT (433 aa). The ABC transporter 2 domain occupies 751 to 979; the sequence is ISWKNINYTI…FVAHDRRLTF (229 aa). An ATP-binding site is contributed by 782–789; that stretch reads GESGAGKT. A helical membrane pass occupies residues 1091–1111; the sequence is YVFAKYALNAGAGLFIGFSFW. Over 1112–1117 the chain is Extracellular; sequence RTKHNI. The helical transmembrane segment at 1118–1138 threads the bilayer; the sequence is NGLQDAIFLCFMMLCVSSPLI. Residues 1139-1175 lie on the Cytoplasmic side of the membrane; the sequence is NQVQDKALQSKEVYIAREARSNTYHWTVLLIAQTIVE. A helical transmembrane segment spans residues 1176–1196; that stretch reads LPLAISSSTLFFLCCYFCCGF. Residues 1197 to 1204 lie on the Extracellular side of the membrane; the sequence is ETSARVAG. The chain crosses the membrane as a helical span at residues 1205–1225; it reads VFYLNYILFSMYYLSFGLWLL. The Cytoplasmic portion of the chain corresponds to 1226-1230; it reads YSAPD. The chain crosses the membrane as a helical span at residues 1231–1251; the sequence is LQTAAVFVAFLYSFTASFCGV. At 1252 to 1355 the chain is on the extracellular side; that stretch reads MQPYSLFPRF…NMSYHHRWRN (104 aa). N1289, N1324, and N1346 each carry an N-linked (GlcNAc...) asparagine glycan. The chain crosses the membrane as a helical span at residues 1356–1376; sequence FGFEWVFVCFNIAAMFVGFYL. The Cytoplasmic segment spans residues 1377-1411; it reads TYIKKIWPSVIDGIKKCIPSMRRSKTSHNPNEQSV.

It belongs to the ABC transporter superfamily. ABCG family. PDR (TC 3.A.1.205) subfamily.

It localises to the membrane. Functionally, transporter involved in the uptake of sterol. The sequence is that of ATP-dependent permease PDR11 (PDR11) from Saccharomyces cerevisiae (strain ATCC 204508 / S288c) (Baker's yeast).